The chain runs to 424 residues: Serine hydroxymethyltransferase 2 (424 aa).

(6S)-5,6,7,8-tetrahydrofolate contacts are provided by residues L125 and 129-131 (GHL). At K234 the chain carries N6-(pyridoxal phosphate)lysine. Position 250 (E250) interacts with (6S)-5,6,7,8-tetrahydrofolate.

This sequence belongs to the SHMT family. In terms of assembly, homodimer. Pyridoxal 5'-phosphate serves as cofactor.

It localises to the cytoplasm. The catalysed reaction is (6R)-5,10-methylene-5,6,7,8-tetrahydrofolate + glycine + H2O = (6S)-5,6,7,8-tetrahydrofolate + L-serine. It functions in the pathway one-carbon metabolism; tetrahydrofolate interconversion. Its pathway is amino-acid biosynthesis; glycine biosynthesis; glycine from L-serine: step 1/1. Functionally, catalyzes the reversible interconversion of serine and glycine with tetrahydrofolate (THF) serving as the one-carbon carrier. This reaction serves as the major source of one-carbon groups required for the biosynthesis of purines, thymidylate, methionine, and other important biomolecules. Also exhibits THF-independent aldolase activity toward beta-hydroxyamino acids, producing glycine and aldehydes, via a retro-aldol mechanism. This is Serine hydroxymethyltransferase 2 from Burkholderia pseudomallei (strain 1710b).